Consider the following 302-residue polypeptide: 4-hydroxy-tetrahydrodipicolinate synthase (302 aa).

Thr56 contacts pyruvate. Tyr145 acts as the Proton donor/acceptor in catalysis. Lys173 (schiff-base intermediate with substrate) is an active-site residue. Val215 contributes to the pyruvate binding site.

This sequence belongs to the DapA family. Homotetramer; dimer of dimers.

It is found in the cytoplasm. It catalyses the reaction L-aspartate 4-semialdehyde + pyruvate = (2S,4S)-4-hydroxy-2,3,4,5-tetrahydrodipicolinate + H2O + H(+). It participates in amino-acid biosynthesis; L-lysine biosynthesis via DAP pathway; (S)-tetrahydrodipicolinate from L-aspartate: step 3/4. Catalyzes the condensation of (S)-aspartate-beta-semialdehyde [(S)-ASA] and pyruvate to 4-hydroxy-tetrahydrodipicolinate (HTPA). This is 4-hydroxy-tetrahydrodipicolinate synthase from Prochlorococcus marinus subsp. pastoris (strain CCMP1986 / NIES-2087 / MED4).